The sequence spans 398 residues: MRGSYLFTSESVSEGHPDKVCDRISDEIVDLFFSEGPKAGVDPWAIRAACETLATTNKVVIAGETRGPESVTKEKIESVVRAAIKDIGYEQDGFHWKTADIDILLHPQSADIAQGVDALQPGANKEEGAGDQGIMFGYACNETPDLMPAPIFYAHKILRLISEARHSGKEKVLGPDSKSQVTVQYENGKPVGVREIVVSHQHLIEDMSSDQVRERVEPYVREALPKAWVTDKTIWHINPTGKFFIGGPDGDAGLTGRKIIVDTYGGAAPHGGGAFSGKDPTKVDRSAAYAARYLAKNIVAAGLADRCTLQLAYAIGVARPLSIYIDTHGTGKAPEDTLERIVSEAMDLTPRGIRKHLDLNRPIYARTSSYGHFGRTPDNEGGFSWEKTDLAEVLKRAV.

His16 lines the ATP pocket. Asp18 contacts Mg(2+). Residue Glu51 coordinates K(+). Residues Glu64 and Gln108 each contribute to the L-methionine site. The tract at residues 108 to 118 (QSADIAQGVDA) is flexible loop. Residues 176–178 (DSK), 242–243 (KF), Asp251, 257–258 (RK), Ala274, and Lys278 each bind ATP. An L-methionine-binding site is contributed by Asp251. Position 282 (Lys282) interacts with L-methionine.

Belongs to the AdoMet synthase family. Homotetramer; dimer of dimers. The cofactor is Mg(2+). It depends on K(+) as a cofactor.

Its subcellular location is the cytoplasm. It carries out the reaction L-methionine + ATP + H2O = S-adenosyl-L-methionine + phosphate + diphosphate. The protein operates within amino-acid biosynthesis; S-adenosyl-L-methionine biosynthesis; S-adenosyl-L-methionine from L-methionine: step 1/1. Functionally, catalyzes the formation of S-adenosylmethionine (AdoMet) from methionine and ATP. The overall synthetic reaction is composed of two sequential steps, AdoMet formation and the subsequent tripolyphosphate hydrolysis which occurs prior to release of AdoMet from the enzyme. The sequence is that of S-adenosylmethionine synthase from Nitrobacter hamburgensis (strain DSM 10229 / NCIMB 13809 / X14).